The following is a 510-amino-acid chain: MASTIARTEERQNAGTMELKDDTVIIVLGASGDLAKKKTFPALFGLYRNKFLPKGIKIVGYARTNMDHEEYLRRVRSYIKTPTKEIEEQLDSFCQFCTYISGQYDKDDSFINLNKHLEEIEKGQKEQNRIYYMALPPSVFTTVSDQLKRNCYPKNGVARIIVEKPFGKDLQSSRDLQKALEPNWKEEEIFRIDHYLGKEMVKNILIMRFGNEFFNATWNRHHIDNVQITFKEPFGTEGRGGYFDEFGIIRDVMQNHLLQVLTLLAMERPISFSAEDIRDEKVRVLRAMDAIEPKNVIIGQYGKSLDGSKPAYKEDETVPQDSRCPTFCAMVAYIKNERWDGVPFIMKAGKALNEQKTEIRIQFRDVTSGIFKDIPRNELVIRVQPNESVYIKMNSKLPGLSMQTVVTELDLTYRRRFSDLKIPEAYESLILDALKGDHSNFVRDDELDASWRIFTPLLHYLDDNKEIIPMEYPYGSRGPAVLDDFTASFGYKFSDAAGYQWPLTSTPNRL.

NADP(+)-binding positions include 29-36, Arg-63, and Lys-164; that span reads GASGDLAK. D-glucose 6-phosphate is bound by residues Lys-164, 194–198, Glu-232, and Asp-251; that span reads HYLGK. The active-site Proton acceptor is His-256. Lys-347 contributes to the NADP(+) binding site. Lys-350 contacts D-glucose 6-phosphate. NADP(+) is bound by residues Lys-356, Arg-360, and Arg-382. Gln-384 is a binding site for D-glucose 6-phosphate. Residues 390 to 392, 410 to 412, and Arg-477 each bind NADP(+); these read YIK and DLT.

It belongs to the glucose-6-phosphate dehydrogenase family.

It catalyses the reaction D-glucose 6-phosphate + NADP(+) = 6-phospho-D-glucono-1,5-lactone + NADPH + H(+). Its pathway is carbohydrate degradation; pentose phosphate pathway; D-ribulose 5-phosphate from D-glucose 6-phosphate (oxidative stage): step 1/3. Catalyzes the rate-limiting step of the oxidative pentose-phosphate pathway, which represents a route for the dissimilation of carbohydrates besides glycolysis. The main function of this enzyme is to provide reducing power (NADPH) and pentose phosphates for fatty acid and nucleic acid synthesis. The protein is Glucose-6-phosphate 1-dehydrogenase (gsdA) of Aspergillus niger.